The chain runs to 201 residues: dITP/XTP pyrophosphatase (201 aa).

8-13 (TTNENK) provides a ligand contact to substrate. Asp-68 acts as the Proton acceptor in catalysis. Asp-68 contacts Mg(2+). Residues Ser-69, 155 to 158 (FGYD), Lys-177, and 182 to 183 (HR) contribute to the substrate site.

This sequence belongs to the HAM1 NTPase family. Homodimer. Mg(2+) is required as a cofactor.

The catalysed reaction is XTP + H2O = XMP + diphosphate + H(+). It catalyses the reaction dITP + H2O = dIMP + diphosphate + H(+). It carries out the reaction ITP + H2O = IMP + diphosphate + H(+). Its function is as follows. Pyrophosphatase that catalyzes the hydrolysis of nucleoside triphosphates to their monophosphate derivatives, with a high preference for the non-canonical purine nucleotides XTP (xanthosine triphosphate), dITP (deoxyinosine triphosphate) and ITP. Seems to function as a house-cleaning enzyme that removes non-canonical purine nucleotides from the nucleotide pool, thus preventing their incorporation into DNA/RNA and avoiding chromosomal lesions. This is dITP/XTP pyrophosphatase from Borreliella burgdorferi (strain ATCC 35210 / DSM 4680 / CIP 102532 / B31) (Borrelia burgdorferi).